The sequence spans 413 residues: Serine hydroxymethyltransferase (413 aa).

Residues L115 and 119–121 (GHL) contribute to the (6S)-5,6,7,8-tetrahydrofolate site. Residue K224 is modified to N6-(pyridoxal phosphate)lysine.

Belongs to the SHMT family. Homodimer. Pyridoxal 5'-phosphate serves as cofactor.

It localises to the cytoplasm. It carries out the reaction (6R)-5,10-methylene-5,6,7,8-tetrahydrofolate + glycine + H2O = (6S)-5,6,7,8-tetrahydrofolate + L-serine. The protein operates within one-carbon metabolism; tetrahydrofolate interconversion. It participates in amino-acid biosynthesis; glycine biosynthesis; glycine from L-serine: step 1/1. Its function is as follows. Catalyzes the reversible interconversion of serine and glycine with tetrahydrofolate (THF) serving as the one-carbon carrier. This reaction serves as the major source of one-carbon groups required for the biosynthesis of purines, thymidylate, methionine, and other important biomolecules. Also exhibits THF-independent aldolase activity toward beta-hydroxyamino acids, producing glycine and aldehydes, via a retro-aldol mechanism. This chain is Serine hydroxymethyltransferase, found in Mycoplasma mycoides subsp. mycoides SC (strain CCUG 32753 / NCTC 10114 / PG1).